Here is a 309-residue protein sequence, read N- to C-terminus: E3 ubiquitin-protein ligase SINAT5 (309 aa).

The RING-type zinc-finger motif lies at 46-82 (CPVCTNSMYPPIHQCHNGHTLCSTCKSRVHNRCPTCR). The interval 96 to 289 (VAESLELPCK…KELKLRVTGR (194 aa)) is SBD. Residues 99 to 159 (SLELPCKYYN…LVAHLRDDHK (61 aa)) form an SIAH-type zinc finger. The Zn(2+) site is built by Cys-104, Cys-111, His-123, Cys-127, Cys-134, Cys-141, His-153, and His-158.

Belongs to the SINA (Seven in absentia) family. In terms of assembly, homodimer; homodimerization is essential for its function. Interacts with UBC28 and NAC021/NAC022. Interacts with SINAT6. Interacts with ATG6 and TRAF1A. Interacts with WAV3. Interacts with FREE1. In terms of tissue distribution, expressed at low level in the vascular tissue of mature roots. Expressed in lateral roots and in elongation zone of the main root upon stimulation by auxin. Colocalizes with NAC021/NAC022.

Its subcellular location is the nucleus. The protein resides in the cytoplasm. The enzyme catalyses S-ubiquitinyl-[E2 ubiquitin-conjugating enzyme]-L-cysteine + [acceptor protein]-L-lysine = [E2 ubiquitin-conjugating enzyme]-L-cysteine + N(6)-ubiquitinyl-[acceptor protein]-L-lysine.. Its pathway is protein modification; protein ubiquitination. In terms of biological role, E3 ubiquitin-protein ligase that mediates ubiquitination and subsequent proteasomal degradation of target proteins. E3 ubiquitin ligases accept ubiquitin from an E2 ubiquitin-conjugating enzyme in the form of a thioester and then directly transfers the ubiquitin to targeted substrates. Mediates the ubiquitination and proteasomal-dependent degradation of NAC021/NAC022, a transcription activator that functions downstream of the auxin signals, thereby acting as a down-regulator of auxin signals. Involved in the formation of lateral roots. Is antagonist to SINAT1, SINAT2, SINAT3 and SINAT4 by suppressing FREE1 ubiquitination and degradation mediated by SINAT1, SINAT2, SINAT3 and SINAT4, and promoting FREE1 accumulation. In Arabidopsis thaliana (Mouse-ear cress), this protein is E3 ubiquitin-protein ligase SINAT5.